Reading from the N-terminus, the 263-residue chain is Expansin-like A3 (263 aa).

The N-terminal stretch at 1 to 20 (MRSFLYLIVVIFLFSSSVNA) is a signal peptide. In terms of domain architecture, Expansin-like EG45 spans 41–147 (SGACAYGPMA…QRVPCNYGKR (107 aa)). Asn-99 and Asn-102 each carry an N-linked (GlcNAc...) asparagine glycan. An Expansin-like CBD domain is found at 161 to 243 (NYLAIKLLYQ…NWNSGRIYDA (83 aa)).

It belongs to the expansin family. Expansin-like A subfamily.

It is found in the secreted. The sequence is that of Expansin-like A3 (EXLA3) from Arabidopsis thaliana (Mouse-ear cress).